Here is a 145-residue protein sequence, read N- to C-terminus: Bacilliredoxin SAR1441 (145 aa).

This sequence belongs to the bacilliredoxin family.

The polypeptide is Bacilliredoxin SAR1441 (Staphylococcus aureus (strain MRSA252)).